A 604-amino-acid chain; its full sequence is Glutamine--fructose-6-phosphate aminotransferase [isomerizing] (604 aa).

Cysteine 2 acts as the Nucleophile; for GATase activity in catalysis. The region spanning 2–218 is the Glutamine amidotransferase type-2 domain; it reads CGIVGVVGNR…DKELVILTKD (217 aa). SIS domains lie at 284 to 423 and 456 to 594; these read IITS…ANGK and VQAL…VDKP. The active-site For Fru-6P isomerization activity is the lysine 599.

As to quaternary structure, homodimer.

It is found in the cytoplasm. The catalysed reaction is D-fructose 6-phosphate + L-glutamine = D-glucosamine 6-phosphate + L-glutamate. Its function is as follows. Catalyzes the first step in hexosamine metabolism, converting fructose-6P into glucosamine-6P using glutamine as a nitrogen source. The chain is Glutamine--fructose-6-phosphate aminotransferase [isomerizing] from Streptococcus pyogenes serotype M1.